The chain runs to 556 residues: DNA ligase B (556 aa).

The N6-AMP-lysine intermediate role is filled by Lys122.

Belongs to the NAD-dependent DNA ligase family. LigB subfamily.

It catalyses the reaction NAD(+) + (deoxyribonucleotide)n-3'-hydroxyl + 5'-phospho-(deoxyribonucleotide)m = (deoxyribonucleotide)n+m + AMP + beta-nicotinamide D-nucleotide.. In terms of biological role, catalyzes the formation of phosphodiester linkages between 5'-phosphoryl and 3'-hydroxyl groups in double-stranded DNA using NAD as a coenzyme and as the energy source for the reaction. The protein is DNA ligase B of Enterobacter sp. (strain 638).